The following is a 393-amino-acid chain: UDP-N-acetylglucosamine--N-acetylmuramyl-(pentapeptide) pyrophosphoryl-undecaprenol N-acetylglucosamine transferase (393 aa).

Residues Thr14–Gly16, Asn128, Arg170, Ser210, and Gln321 each bind UDP-N-acetyl-alpha-D-glucosamine.

It belongs to the glycosyltransferase 28 family. MurG subfamily.

The protein localises to the cell membrane. It catalyses the reaction di-trans,octa-cis-undecaprenyl diphospho-N-acetyl-alpha-D-muramoyl-L-alanyl-D-glutamyl-meso-2,6-diaminopimeloyl-D-alanyl-D-alanine + UDP-N-acetyl-alpha-D-glucosamine = di-trans,octa-cis-undecaprenyl diphospho-[N-acetyl-alpha-D-glucosaminyl-(1-&gt;4)]-N-acetyl-alpha-D-muramoyl-L-alanyl-D-glutamyl-meso-2,6-diaminopimeloyl-D-alanyl-D-alanine + UDP + H(+). The protein operates within cell wall biogenesis; peptidoglycan biosynthesis. Cell wall formation. Catalyzes the transfer of a GlcNAc subunit on undecaprenyl-pyrophosphoryl-MurNAc-pentapeptide (lipid intermediate I) to form undecaprenyl-pyrophosphoryl-MurNAc-(pentapeptide)GlcNAc (lipid intermediate II). This chain is UDP-N-acetylglucosamine--N-acetylmuramyl-(pentapeptide) pyrophosphoryl-undecaprenol N-acetylglucosamine transferase, found in Bifidobacterium adolescentis (strain ATCC 15703 / DSM 20083 / NCTC 11814 / E194a).